Consider the following 93-residue polypeptide: Large ribosomal subunit protein eL42 (93 aa).

Positions 11, 14, 72, and 75 each coordinate Zn(2+). The C4-type zinc finger occupies Cys11 to Cys75.

Belongs to the eukaryotic ribosomal protein eL42 family. Part of the 50S ribosomal subunit. Zn(2+) serves as cofactor.

Its function is as follows. Binds to the 23S rRNA. The polypeptide is Large ribosomal subunit protein eL42 (rpl44e) (Natronomonas pharaonis (strain ATCC 35678 / DSM 2160 / CIP 103997 / JCM 8858 / NBRC 14720 / NCIMB 2260 / Gabara) (Halobacterium pharaonis)).